Consider the following 431-residue polypeptide: UDP-N-acetylglucosamine 1-carboxyvinyltransferase (431 aa).

Residue lysine 22 to asparagine 23 coordinates phosphoenolpyruvate. Arginine 102 serves as a coordination point for UDP-N-acetyl-alpha-D-glucosamine. Catalysis depends on cysteine 126, which acts as the Proton donor. A 2-(S-cysteinyl)pyruvic acid O-phosphothioketal modification is found at cysteine 126. UDP-N-acetyl-alpha-D-glucosamine contacts are provided by aspartate 318 and isoleucine 340.

This sequence belongs to the EPSP synthase family. MurA subfamily.

It is found in the cytoplasm. It catalyses the reaction phosphoenolpyruvate + UDP-N-acetyl-alpha-D-glucosamine = UDP-N-acetyl-3-O-(1-carboxyvinyl)-alpha-D-glucosamine + phosphate. It participates in cell wall biogenesis; peptidoglycan biosynthesis. In terms of biological role, cell wall formation. Adds enolpyruvyl to UDP-N-acetylglucosamine. The polypeptide is UDP-N-acetylglucosamine 1-carboxyvinyltransferase (Bartonella quintana (strain Toulouse) (Rochalimaea quintana)).